The chain runs to 410 residues: Killer cell immunoglobulin-like receptor 3DL3 (410 aa).

Positions 1 to 25 (MSLMVVSMACVGFFLLEGPWPHVGG) are cleaved as a signal peptide. The Extracellular segment spans residues 26 to 322 (QDKPFLSAWP…VSVTGNSRHL (297 aa)). Ig-like C2-type domains lie at 42-97 (GQHV…RCCS), 137-197 (GETV…RCFG), and 237-295 (GENV…RCFG). Intrachain disulfides connect Cys-49–Cys-95 and Cys-144–Cys-195. N-linked (GlcNAc...) asparagine glycans are attached at residues Asn-179, Asn-239, and Asn-273. The cysteines at positions 244 and 293 are disulfide-linked. The helical transmembrane segment at 323-343 (HVLIGTSVVIIPFAILLFFLL) threads the bilayer. At 344–410 (HRWCANKKNA…PKTPPTDTSV (67 aa)) the chain is on the cytoplasmic side.

Belongs to the immunoglobulin superfamily.

The protein localises to the cell membrane. Receptor on natural killer cells. May inhibit the activity of NK cells thus preventing cell lysis. The protein is Killer cell immunoglobulin-like receptor 3DL3 (KIR3DL3) of Homo sapiens (Human).